Consider the following 160-residue polypeptide: Transcription elongation factor GreA (160 aa).

It belongs to the GreA/GreB family.

Functionally, necessary for efficient RNA polymerase transcription elongation past template-encoded arresting sites. The arresting sites in DNA have the property of trapping a certain fraction of elongating RNA polymerases that pass through, resulting in locked ternary complexes. Cleavage of the nascent transcript by cleavage factors such as GreA or GreB allows the resumption of elongation from the new 3'terminus. GreA releases sequences of 2 to 3 nucleotides. This Francisella tularensis subsp. tularensis (strain FSC 198) protein is Transcription elongation factor GreA.